The following is a 156-amino-acid chain: Cytochrome c-type biogenesis protein CcmE (156 aa).

The Cytoplasmic segment spans residues 1 to 8; the sequence is MNPLRRKR. Residues 9-29 form a helical; Signal-anchor for type II membrane protein membrane-spanning segment; that stretch reads LLIILAILAGVGIAVGLAMSA. Over 30-156 the chain is Periplasmic; that stretch reads LRENINLFYT…RIRSLPRRAK (127 aa). Heme-binding residues include H124 and Y128.

The protein belongs to the CcmE/CycJ family.

It localises to the cell inner membrane. Functionally, heme chaperone required for the biogenesis of c-type cytochromes. Transiently binds heme delivered by CcmC and transfers the heme to apo-cytochromes in a process facilitated by CcmF and CcmH. The protein is Cytochrome c-type biogenesis protein CcmE of Pseudomonas fluorescens.